Here is a 404-residue protein sequence, read N- to C-terminus: Trigger factor (404 aa).

Residues 160–225 (KDHLFVRTEE…VLEVKTLKLP (66 aa)) enclose the PPIase FKBP-type domain.

The protein belongs to the FKBP-type PPIase family. Tig subfamily.

The protein localises to the cytoplasm. The enzyme catalyses [protein]-peptidylproline (omega=180) = [protein]-peptidylproline (omega=0). Functionally, involved in protein export. Acts as a chaperone by maintaining the newly synthesized protein in an open conformation. Functions as a peptidyl-prolyl cis-trans isomerase. This chain is Trigger factor, found in Thermus thermophilus (strain ATCC 27634 / DSM 579 / HB8).